The chain runs to 117 residues: Non-specific lipid-transfer protein (117 aa).

The signal sequence occupies residues 1–26 (MACSAMTKLALVVALCMVVSVPIAQA). 4 disulfides stabilise this stretch: Cys29–Cys76, Cys39–Cys53, Cys54–Cys99, and Cys74–Cys113.

This sequence belongs to the plant LTP family.

Its function is as follows. Plant non-specific lipid-transfer proteins transfer phospholipids as well as galactolipids across membranes. May play a role in wax or cutin deposition in the cell walls of expanding epidermal cells and certain secretory tissues. The protein is Non-specific lipid-transfer protein of Prunus avium (Cherry).